The chain runs to 247 residues: 4-hydroxy-tetrahydrodipicolinate reductase (247 aa).

Residues Gly9–Met14, Gly76–Thr78, and Ala103–Phe106 contribute to the NAD(+) site. His133 (proton donor/acceptor) is an active-site residue. His134 contributes to the (S)-2,3,4,5-tetrahydrodipicolinate binding site. The active-site Proton donor is the Lys137. Position 143 to 144 (Gly143 to Thr144) interacts with (S)-2,3,4,5-tetrahydrodipicolinate.

It belongs to the DapB family.

It is found in the cytoplasm. The catalysed reaction is (S)-2,3,4,5-tetrahydrodipicolinate + NAD(+) + H2O = (2S,4S)-4-hydroxy-2,3,4,5-tetrahydrodipicolinate + NADH + H(+). It carries out the reaction (S)-2,3,4,5-tetrahydrodipicolinate + NADP(+) + H2O = (2S,4S)-4-hydroxy-2,3,4,5-tetrahydrodipicolinate + NADPH + H(+). It participates in amino-acid biosynthesis; L-lysine biosynthesis via DAP pathway; (S)-tetrahydrodipicolinate from L-aspartate: step 4/4. Catalyzes the conversion of 4-hydroxy-tetrahydrodipicolinate (HTPA) to tetrahydrodipicolinate. The protein is 4-hydroxy-tetrahydrodipicolinate reductase of Beutenbergia cavernae (strain ATCC BAA-8 / DSM 12333 / CCUG 43141 / JCM 11478 / NBRC 16432 / NCIMB 13614 / HKI 0122).